The sequence spans 206 residues: Small ribosomal subunit protein uS4c (206 aa).

Residues Met-94 to Asn-152 enclose the S4 RNA-binding domain.

The protein belongs to the universal ribosomal protein uS4 family. In terms of assembly, part of the 30S ribosomal subunit. Contacts protein S5. The interaction surface between S4 and S5 is involved in control of translational fidelity.

It is found in the plastid. Its subcellular location is the chloroplast. In terms of biological role, one of the primary rRNA binding proteins, it binds directly to 16S rRNA where it nucleates assembly of the body of the 30S subunit. Functionally, with S5 and S12 plays an important role in translational accuracy. In Chara vulgaris (Common stonewort), this protein is Small ribosomal subunit protein uS4c (rps4).